A 179-amino-acid polypeptide reads, in one-letter code: NADH dehydrogenase [ubiquinone] 1 beta subcomplex subunit 9 (179 aa).

Position 2 is an N-acetylalanine (A2). Phosphoserine is present on S85. The disordered stretch occupies residues 136-162 (EVKQLQEETPPGGPLTEALPPARKEGD).

Belongs to the complex I LYR family. As to quaternary structure, mammalian complex I is composed of 45 different subunits.

The protein localises to the mitochondrion inner membrane. Functionally, accessory subunit of the mitochondrial membrane respiratory chain NADH dehydrogenase (Complex I), that is believed to be not involved in catalysis. Complex I functions in the transfer of electrons from NADH to the respiratory chain. The immediate electron acceptor for the enzyme is believed to be ubiquinone. This Pan troglodytes (Chimpanzee) protein is NADH dehydrogenase [ubiquinone] 1 beta subcomplex subunit 9 (NDUFB9).